The chain runs to 258 residues: Phosphate import ATP-binding protein PstB (258 aa).

In terms of domain architecture, ABC transporter spans 5 to 247 (IDISGLSAFY…ERIFSNPSVQ (243 aa)). 37 to 44 (GPSGCGKS) provides a ligand contact to ATP.

This sequence belongs to the ABC transporter superfamily. Phosphate importer (TC 3.A.1.7) family. The complex is composed of two ATP-binding proteins (PstB), two transmembrane proteins (PstC and PstA) and a solute-binding protein (PstS).

The protein resides in the cell membrane. The enzyme catalyses phosphate(out) + ATP + H2O = ADP + 2 phosphate(in) + H(+). Part of the ABC transporter complex PstSACB involved in phosphate import. Responsible for energy coupling to the transport system. This Streptomyces griseus protein is Phosphate import ATP-binding protein PstB.